The following is a 32-amino-acid chain: Periplasmic [NiFe] hydrogenase small subunit (32 aa).

Residues Cys17 and Cys20 each contribute to the [4Fe-4S] cluster site.

Belongs to the [NiFe]/[NiFeSe] hydrogenase small subunit family. As to quaternary structure, heterodimer of a large and a small subunit. [3Fe-4S] cluster serves as cofactor. It depends on [4Fe-4S] cluster as a cofactor.

It localises to the periplasm. The enzyme catalyses 2 Fe(III)-[cytochrome c3] + H2 = 2 Fe(II)-[cytochrome c3] + 2 H(+). This is Periplasmic [NiFe] hydrogenase small subunit (hydA) from Desulfovibrio multispirans.